Here is a 385-residue protein sequence, read N- to C-terminus: A-type ATP synthase subunit C (385 aa).

This sequence belongs to the V-ATPase V0D/AC39 subunit family. Has multiple subunits with at least A(3), B(3), C, D, E, F, H, I and proteolipid K(x).

It is found in the cell membrane. Component of the A-type ATP synthase that produces ATP from ADP in the presence of a proton gradient across the membrane. The protein is A-type ATP synthase subunit C of Methanothermobacter thermautotrophicus (strain ATCC 29096 / DSM 1053 / JCM 10044 / NBRC 100330 / Delta H) (Methanobacterium thermoautotrophicum).